Consider the following 330-residue polypeptide: D-alanine--D-alanine ligase (330 aa).

Residues 122 to 323 (NRFLSGFGIR…MKEVLCTIIR (202 aa)) form the ATP-grasp domain. 151 to 206 (TARMGLPLFVKPNVGGSSIATTKVVEAAQLLPAIGQAFSEGEEVMIERLICGTEVT) provides a ligand contact to ATP. Mg(2+) is bound by residues Asp277, Glu290, and Asn292.

It belongs to the D-alanine--D-alanine ligase family. Mg(2+) serves as cofactor. It depends on Mn(2+) as a cofactor.

The protein localises to the cytoplasm. The catalysed reaction is 2 D-alanine + ATP = D-alanyl-D-alanine + ADP + phosphate + H(+). It functions in the pathway cell wall biogenesis; peptidoglycan biosynthesis. Its function is as follows. Cell wall formation. The chain is D-alanine--D-alanine ligase from Porphyromonas gingivalis (strain ATCC 33277 / DSM 20709 / CIP 103683 / JCM 12257 / NCTC 11834 / 2561).